The following is a 324-amino-acid chain: Beta-ketoacyl-[acyl-carrier-protein] synthase III (324 aa).

Active-site residues include Cys-112 and His-249. Residues 250-254 (QANRR) form an ACP-binding region. The active site involves Asn-279.

Belongs to the thiolase-like superfamily. FabH family. As to quaternary structure, homodimer.

Its subcellular location is the cytoplasm. The catalysed reaction is malonyl-[ACP] + acetyl-CoA + H(+) = 3-oxobutanoyl-[ACP] + CO2 + CoA. The protein operates within lipid metabolism; fatty acid biosynthesis. Functionally, catalyzes the condensation reaction of fatty acid synthesis by the addition to an acyl acceptor of two carbons from malonyl-ACP. Catalyzes the first condensation reaction which initiates fatty acid synthesis and may therefore play a role in governing the total rate of fatty acid production. Possesses both acetoacetyl-ACP synthase and acetyl transacylase activities. Its substrate specificity determines the biosynthesis of branched-chain and/or straight-chain of fatty acids. The sequence is that of Beta-ketoacyl-[acyl-carrier-protein] synthase III from Streptococcus pyogenes serotype M2 (strain MGAS10270).